Reading from the N-terminus, the 203-residue chain is VPS4-associated protein 1 (203 aa).

Over residues 99–109 the composition is skewed to basic and acidic residues; the sequence is EKETNNSKDPD. Disordered stretches follow at residues 99–125 and 171–193; these read EKET…AKND and QVNR…EELL. Positions 110–120 are enriched in low complexity; the sequence is PTTTDSTDTSP. The stretch at 121 to 157 forms a coiled coil; sequence QAKNDAEILSETKKQYSKILDKVTELQRKNRKYELAK. The span at 171–182 shows a compositional bias: basic and acidic residues; that stretch reads QVNRERYLKEQE.

As to quaternary structure, interacts with VPS4.

The protein localises to the cytoplasm. Its subcellular location is the endosome. In terms of biological role, VPS4-associated protein involved in trafficking to the vacuole. This Saccharomyces cerevisiae (strain ATCC 204508 / S288c) (Baker's yeast) protein is VPS4-associated protein 1 (VFA1).